We begin with the raw amino-acid sequence, 1256 residues long: Centrosome and spindle pole-associated protein 1 (1256 aa).

Coiled coils occupy residues 38-62 (ADNL…LESD) and 114-135 (EDYE…RRYL). Basic and acidic residues predominate over residues 189–208 (GKEESSEKFRQVEKSTEPKS). Disordered stretches follow at residues 189-244 (GKEE…LTPS) and 381-403 (AENK…CSPF). Positions 222–232 (LTSQIQTSCEN) are enriched in polar residues. Position 244 is a phosphoserine (Ser244). Residues 244 to 270 (SEAYEELLNQRRLEEDRYRQLDDEIEL) are a coiled coil. A coiled-coil region spans residues 417–449 (QRRKEKYRLELLEQMAEQQRNKRREKDLELRVA). 2 positions are modified to phosphoserine: Ser459 and Ser527. Positions 625–669 (SKQSLQSYQEALQQQIREREERRKKEREEKEEYEAKLEAEMRTYN) form a coiled coil. 2 disordered regions span residues 735–757 (ANKS…VFGE) and 813–853 (EYEE…KKEE). Polar residues predominate over residues 736 to 748 (NKSSGHMQTQSSP). Residues Ser901 and Ser920 each carry the phosphoserine modification. Residues 913 to 932 (SSMSRAQSPPVPARKNQLRA) form a disordered region. A coiled-coil region spans residues 925 to 964 (ARKNQLRAEEEKKNVIMELSEMRKQLRSEERRLQERLLHM). Ser966 carries the phosphoserine modification. 2 disordered regions span residues 1114–1147 (EDDV…RPNV) and 1232–1256 (LNQE…TAHG). Polar residues predominate over residues 1246–1256 (FTWQGLSTAHG).

As to quaternary structure, interacts with PLEKHG6. Interacts with ARMC9, TOGARAM1, CCDC66, CEP104 and CEP290. Post-translationally, phosphorylated. Phosphorylation increases in colcemide-treated cells. As to expression, expressed in adult and fetal brain with enrichment in the cerebellum. Detected in testis.

The protein localises to the cytoplasm. Its subcellular location is the cytoskeleton. The protein resides in the microtubule organizing center. It is found in the centrosome. It localises to the spindle. The protein localises to the spindle pole. Its subcellular location is the cell projection. The protein resides in the cilium. In terms of biological role, may play a role in cell-cycle-dependent microtubule organization. In Homo sapiens (Human), this protein is Centrosome and spindle pole-associated protein 1 (CSPP1).